Consider the following 454-residue polypeptide: tRNA modification GTPase MnmE (454 aa).

Residues Arg-23, Glu-80, and Lys-120 each contribute to the (6S)-5-formyl-5,6,7,8-tetrahydrofolate site. Positions 216–377 (GMKVVIAGRP…LRDHLKQSMG (162 aa)) constitute a TrmE-type G domain. Asn-226 is a binding site for K(+). Residues 226 to 231 (NAGKSS), 245 to 251 (TDIAGTT), 270 to 273 (DTAG), 335 to 338 (NKAD), and 358 to 360 (SAR) contribute to the GTP site. Ser-230 contributes to the Mg(2+) binding site. Positions 245, 247, and 250 each coordinate K(+). Thr-251 is a binding site for Mg(2+). Lys-454 provides a ligand contact to (6S)-5-formyl-5,6,7,8-tetrahydrofolate.

It belongs to the TRAFAC class TrmE-Era-EngA-EngB-Septin-like GTPase superfamily. TrmE GTPase family. In terms of assembly, homodimer. Heterotetramer of two MnmE and two MnmG subunits. The cofactor is K(+).

Its subcellular location is the cytoplasm. In terms of biological role, exhibits a very high intrinsic GTPase hydrolysis rate. Involved in the addition of a carboxymethylaminomethyl (cmnm) group at the wobble position (U34) of certain tRNAs, forming tRNA-cmnm(5)s(2)U34. The chain is tRNA modification GTPase MnmE from Yersinia pestis.